The primary structure comprises 175 residues: Ribosome maturation factor RimM (175 aa).

The region spanning 95–175 (SEDEFYWREL…RIEVDWDPGF (81 aa)) is the PRC barrel domain.

Belongs to the RimM family. In terms of assembly, binds ribosomal protein uS19.

Its subcellular location is the cytoplasm. Functionally, an accessory protein needed during the final step in the assembly of 30S ribosomal subunit, possibly for assembly of the head region. Essential for efficient processing of 16S rRNA. May be needed both before and after RbfA during the maturation of 16S rRNA. It has affinity for free ribosomal 30S subunits but not for 70S ribosomes. The polypeptide is Ribosome maturation factor RimM (Aliivibrio fischeri (strain MJ11) (Vibrio fischeri)).